A 181-amino-acid polypeptide reads, in one-letter code: ATP synthase subunit b, chloroplastic (181 aa).

A helical transmembrane segment spans residues 31 to 50 (NVLNIAILLSGVVYLGRNFL).

The protein belongs to the ATPase B chain family. F-type ATPases have 2 components, F(1) - the catalytic core - and F(0) - the membrane proton channel. F(1) has five subunits: alpha(3), beta(3), gamma(1), delta(1), epsilon(1). F(0) has four main subunits: a(1), b(1), b'(1) and c(10-14). The alpha and beta chains form an alternating ring which encloses part of the gamma chain. F(1) is attached to F(0) by a central stalk formed by the gamma and epsilon chains, while a peripheral stalk is formed by the delta, b and b' chains.

It localises to the plastid. It is found in the chloroplast thylakoid membrane. Its function is as follows. F(1)F(0) ATP synthase produces ATP from ADP in the presence of a proton or sodium gradient. F-type ATPases consist of two structural domains, F(1) containing the extramembraneous catalytic core and F(0) containing the membrane proton channel, linked together by a central stalk and a peripheral stalk. During catalysis, ATP synthesis in the catalytic domain of F(1) is coupled via a rotary mechanism of the central stalk subunits to proton translocation. Component of the F(0) channel, it forms part of the peripheral stalk, linking F(1) to F(0). The protein is ATP synthase subunit b, chloroplastic of Rhodomonas salina (Cryptomonas salina).